The sequence spans 368 residues: Homoserine dehydrogenase (368 aa).

3 residues coordinate NAD(+): V12, G14, and V15. An NADP(+)-binding site is contributed by V15. Residues V15, K59, T95, S96, and K119 each contribute to the NADPH site. T95 is an NAD(+) binding site. T95 serves as a coordination point for NADP(+). K119 lines the NADP(+) pocket. Na(+) contacts are provided by E146, V149, A151, and L153. 2 residues coordinate NADP(+): G209 and E212. Positions 212 and 223 each coordinate L-homoserine. K227 acts as the Proton donor in catalysis. Position 349 (G349) interacts with NAD(+). G349 provides a ligand contact to NADP(+). G349 provides a ligand contact to NADPH.

Belongs to the homoserine dehydrogenase family. A metal cation is required as a cofactor.

The enzyme catalyses L-homoserine + NADP(+) = L-aspartate 4-semialdehyde + NADPH + H(+). The catalysed reaction is L-homoserine + NAD(+) = L-aspartate 4-semialdehyde + NADH + H(+). It participates in amino-acid biosynthesis; L-methionine biosynthesis via de novo pathway; L-homoserine from L-aspartate: step 3/3. The protein operates within amino-acid biosynthesis; L-threonine biosynthesis; L-threonine from L-aspartate: step 3/5. In terms of biological role, catalyzes the conversion of L-aspartate-beta-semialdehyde (L-Asa) to L-homoserine (L-Hse), the third step in the biosynthesis of amino acids that derive from aspartate (the aspartate family of amino acids), including methioinine and threonine, the latter of which is a precursor to isoleucine; production of homoserine leads to a branch-point in the pathway as it can either be O-phosphorylated for processing to threonine, or O-acylated for processing to methionine. The polypeptide is Homoserine dehydrogenase (Emericella nidulans (strain FGSC A4 / ATCC 38163 / CBS 112.46 / NRRL 194 / M139) (Aspergillus nidulans)).